Consider the following 253-residue polypeptide: E3 ubiquitin-protein ligase MARCHF3 (253 aa).

The RING-CH-type zinc-finger motif lies at 63-123 (SPFNDRPMCR…ELCHFRFAVE (61 aa)). Positions 71, 74, 87, 89, 97, 100, 113, and 116 each coordinate Zn(2+). The next 2 membrane-spanning stretches (helical) occupy residues 145-165 (LFGD…SGWL) and 182-202 (AVGL…WTLV). A phosphoserine mark is found at Ser-237 and Ser-243.

In terms of assembly, interacts with MARCHF2 and STX6. As to expression, expressed predominantly in lung, colon and spleen. Present in liver (at protein level).

It is found in the cytoplasmic vesicle membrane. The protein localises to the early endosome membrane. It carries out the reaction S-ubiquitinyl-[E2 ubiquitin-conjugating enzyme]-L-cysteine + [acceptor protein]-L-lysine = [E2 ubiquitin-conjugating enzyme]-L-cysteine + N(6)-ubiquitinyl-[acceptor protein]-L-lysine.. Its pathway is protein modification; protein ubiquitination. Its function is as follows. E3 ubiquitin-protein ligase which may be involved in endosomal trafficking. E3 ubiquitin ligases accept ubiquitin from an E2 ubiquitin-conjugating enzyme in the form of a thioester and then directly transfer the ubiquitin to targeted substrates. The sequence is that of E3 ubiquitin-protein ligase MARCHF3 (Marchf3) from Rattus norvegicus (Rat).